The following is a 950-amino-acid chain: Bifunctional glutamine synthetase adenylyltransferase/adenylyl-removing enzyme (950 aa).

The interval 1-440 is adenylyl removase; it reads MLPLPSELQI…VFDHLIGDDA (440 aa). The adenylyl transferase stretch occupies residues 449–950; it reads HGLYKSLWQD…KWLVAAPSDV (502 aa).

Belongs to the GlnE family. The cofactor is Mg(2+).

The enzyme catalyses [glutamine synthetase]-O(4)-(5'-adenylyl)-L-tyrosine + phosphate = [glutamine synthetase]-L-tyrosine + ADP. It catalyses the reaction [glutamine synthetase]-L-tyrosine + ATP = [glutamine synthetase]-O(4)-(5'-adenylyl)-L-tyrosine + diphosphate. Functionally, involved in the regulation of glutamine synthetase GlnA, a key enzyme in the process to assimilate ammonia. When cellular nitrogen levels are high, the C-terminal adenylyl transferase (AT) inactivates GlnA by covalent transfer of an adenylyl group from ATP to specific tyrosine residue of GlnA, thus reducing its activity. Conversely, when nitrogen levels are low, the N-terminal adenylyl removase (AR) activates GlnA by removing the adenylyl group by phosphorolysis, increasing its activity. The regulatory region of GlnE binds the signal transduction protein PII (GlnB) which indicates the nitrogen status of the cell. The protein is Bifunctional glutamine synthetase adenylyltransferase/adenylyl-removing enzyme of Yersinia enterocolitica serotype O:8 / biotype 1B (strain NCTC 13174 / 8081).